Consider the following 669-residue polypeptide: Probable pectinesterase/pectinesterase inhibitor 21 (669 aa).

The helical transmembrane segment at 16–36 (IVITISSVLLISMVVAVTVGV) threads the bilayer. N-linked (GlcNAc...) asparagine glycosylation is found at Asn52, Asn81, Asn94, Asn281, and Asn300. The interval 52–205 (NASVKAVKDV…IELTHNGLAI (154 aa)) is pectinesterase inhibitor 21. Residues 255–551 (DIVVAQDGSG…FTPAQYIQGD (297 aa)) form a pectinesterase 21 region. Residues Thr330 and Gln360 each coordinate substrate. The active-site Proton donor; for pectinesterase activity is the Asp383. Cys397 and Cys417 are joined by a disulfide. The Nucleophile; for pectinesterase activity role is filled by Asp404. Residue Asn416 is glycosylated (N-linked (GlcNAc...) asparagine). Substrate is bound by residues Arg472 and Trp474. The disordered stretch occupies residues 615 to 669 (AYTGTASPESSIKVSSSTETASPESSFTEASTASPESSIMVASTESSGSFFSMFT). Over residues 616–628 (YTGTASPESSIKV) the composition is skewed to polar residues. Over residues 629–652 (SSSTETASPESSFTEASTASPESS) the composition is skewed to low complexity. Residues 654–669 (MVASTESSGSFFSMFT) are compositionally biased toward polar residues.

In the N-terminal section; belongs to the PMEI family. It in the C-terminal section; belongs to the pectinesterase family. As to expression, expressed in flower buds.

The protein localises to the membrane. The enzyme catalyses [(1-&gt;4)-alpha-D-galacturonosyl methyl ester](n) + n H2O = [(1-&gt;4)-alpha-D-galacturonosyl](n) + n methanol + n H(+). It functions in the pathway glycan metabolism; pectin degradation; 2-dehydro-3-deoxy-D-gluconate from pectin: step 1/5. Its function is as follows. Acts in the modification of cell walls via demethylesterification of cell wall pectin. The chain is Probable pectinesterase/pectinesterase inhibitor 21 (PME21) from Arabidopsis thaliana (Mouse-ear cress).